Consider the following 541-residue polypeptide: Nucleoporin NUP57 (541 aa).

The span at 1–13 (MFGFSGSNNGFGN) shows a compositional bias: low complexity. A disordered region spans residues 1–261 (MFGFSGSNNG…STGSNLQQQQ (261 aa)). 2 FG repeats span residues 2 to 3 (FG) and 11 to 12 (FG). Polar residues predominate over residues 19–36 (TGFSFGQNNNNTNTQPSA). FXFG repeat units follow at residues 21–24 (FSFG) and 39–42 (FGFG). FG repeat units follow at residues 56 to 57 (FG) and 65 to 66 (FG). The span at 58–72 (ANQATNTFGSNQQSS) shows a compositional bias: polar residues. One copy of the GLFG 1 repeat lies at 76–79 (GLFG). The span at 83-102 (ALGSLGSSSTTASGTTATGT) shows a compositional bias: low complexity. GLFG repeat units follow at residues 103–106 (GLFG), 120–123 (GLFG), 132–135 (GLFG), and 147–150 (GLFG). Over residues 105–116 (FGQQTAQPQQST) the composition is skewed to polar residues. Over residues 125–146 (KPTTTTGGLFGNSAQNNSTTSG) the composition is skewed to polar residues. The segment covering 153–172 (VGSTGSLMGGNSTQNTSNMN) has biased composition (polar residues). 4 GLFG repeats span residues 175–178 (GLFG), 190–193 (GLFG), 204–207 (GLFG), and 220–223 (GLFG). The segment covering 228-257 (PQTNTAPGLGNTVSTQPSFAWSKPSTGSNL) has biased composition (polar residues). Residues 398-425 (ILKAQSRNVEIEKRILKLGTQLATLKNR) adopt a coiled-coil conformation.

The protein belongs to the nucleoporin GLFG family. As to quaternary structure, component of the nuclear pore complex (NPC). NPC constitutes the exclusive means of nucleocytoplasmic transport. NPCs allow the passive diffusion of ions and small molecules and the active, nuclear transport receptor-mediated bidirectional transport of macromolecules such as proteins, RNAs, ribonucleoparticles (RNPs), and ribosomal subunits across the nuclear envelope. Due to its 8-fold rotational symmetry, all subunits are present with 8 copies or multiples thereof. NUP57 is part of the NUP57 subcomplex (NIC96, NSP1, NUP49, NUP57) interacting with NUP49 and NSP1. Interacts through its FG repeats with karyopherins.

The protein localises to the nucleus. It is found in the nuclear pore complex. It localises to the nucleus membrane. Functions as a component of the nuclear pore complex (NPC). NPC components, collectively referred to as nucleoporins (NUPs), can play the role of both NPC structural components and of docking or interaction partners for transiently associated nuclear transport factors. Active directional transport is assured by both, a Phe-Gly (FG) repeat affinity gradient for these transport factors across the NPC and a transport cofactor concentration gradient across the nuclear envelope (GSP1 and GSP2 GTPases associated predominantly with GTP in the nucleus, with GDP in the cytoplasm). NUP57 plays an important role in several nuclear transport pathways including poly(A)+ RNA, tRNA, and pre-ribosome transport. The sequence is that of Nucleoporin NUP57 (NUP57) from Saccharomyces cerevisiae (strain ATCC 204508 / S288c) (Baker's yeast).